The primary structure comprises 385 residues: Benzoate O-methyltransferase (385 aa).

An S-adenosyl-L-homocysteine-binding site is contributed by tyrosine 18. Position 25 (glutamine 25) interacts with benzoate. Residues cysteine 59, asparagine 64, aspartate 106, leucine 107, serine 145, and tyrosine 146 each contribute to the S-adenosyl-L-homocysteine site. Tryptophan 167 is a benzoate binding site. Positions 184, 270, 272, and 273 each coordinate Mg(2+).

It belongs to the methyltransferase superfamily. Type-7 methyltransferase family. SABATH subfamily. Requires Mg(2+) as cofactor.

It catalyses the reaction benzoate + S-adenosyl-L-methionine = methyl benzoate + S-adenosyl-L-homocysteine. Functionally, methyltransferase involved in the biosynthesis of methyl benzoate in response to stresses. Utilizes exclusively benzoic acid (BA) as substrate. The polypeptide is Benzoate O-methyltransferase (OMT8) (Zea mays (Maize)).